The following is a 433-amino-acid chain: Aspartate--tRNA(Asp/Asn) ligase (433 aa).

Glu167 is a binding site for L-aspartate. The segment at 189 to 192 (QLFK) is aspartate. Arg211 serves as a coordination point for L-aspartate. ATP is bound by residues 211–213 (RAE), 219–221 (RHL), and Glu356. Mg(2+) is bound by residues Glu356 and Ser359. The L-aspartate site is built by Ser359 and Arg363. Residue 404–407 (GGER) participates in ATP binding.

The protein belongs to the class-II aminoacyl-tRNA synthetase family. Type 2 subfamily. In terms of assembly, homodimer. Requires Mg(2+) as cofactor.

The protein resides in the cytoplasm. The enzyme catalyses tRNA(Asx) + L-aspartate + ATP = L-aspartyl-tRNA(Asx) + AMP + diphosphate. Functionally, aspartyl-tRNA synthetase with relaxed tRNA specificity since it is able to aspartylate not only its cognate tRNA(Asp) but also tRNA(Asn). Reaction proceeds in two steps: L-aspartate is first activated by ATP to form Asp-AMP and then transferred to the acceptor end of tRNA(Asp/Asn). The sequence is that of Aspartate--tRNA(Asp/Asn) ligase from Haloferax volcanii (Halobacterium volcanii).